Reading from the N-terminus, the 421-residue chain is NADP(+)-dependent glutamate dehydrogenase (421 aa).

The substrate site is built by Lys70 and Lys94. The Proton donor role is filled by Lys106. Residues Thr190 and Asn221 each coordinate NADP(+). Ser354 lines the substrate pocket.

This sequence belongs to the Glu/Leu/Phe/Val dehydrogenases family. As to quaternary structure, homohexamer.

It carries out the reaction L-glutamate + NADP(+) + H2O = 2-oxoglutarate + NH4(+) + NADPH + H(+). With respect to regulation, is not regulated allosterically. Activity is inhibited in the presence of high ionic strength; the inhibitory effect of KCl is slightly higher than that of NaCl. Its function is as follows. Catalyzes the reversible oxidative deamination of L-glutamate to 2-oxoglutarate and ammonia, thereby playing a key role at the intersection of the carbon and nitrogen metabolic pathways. Shows a high preference for NADP(+)/NADPH as the acceptor/donor over NAD(+)/NADH. May function in vivo in the synthetic direction. Also catalyzes at very low rates the oxidative deamination of L-2-aminobutyrate, and the reductive amination of 2-oxovalerate and 2-oxobutyrate. This Pyrobaculum calidifontis (strain DSM 21063 / JCM 11548 / VA1) protein is NADP(+)-dependent glutamate dehydrogenase.